Consider the following 715-residue polypeptide: Polyribonucleotide nucleotidyltransferase (715 aa).

D488 and D494 together coordinate Mg(2+). In terms of domain architecture, KH spans 555-614; that stretch reads PRIEVMHIPTDKIRDVIGSGGKVIREIVEKTGAKINIEDDGTVKIASSNAKEIEAAKKWI. The 69-residue stretch at 624 to 692 folds into the S1 motif domain; that stretch reads GEIYEGTVVK…ERGKVRLSMK (69 aa).

The protein belongs to the polyribonucleotide nucleotidyltransferase family. Requires Mg(2+) as cofactor.

The protein localises to the cytoplasm. The catalysed reaction is RNA(n+1) + phosphate = RNA(n) + a ribonucleoside 5'-diphosphate. Functionally, involved in mRNA degradation. Catalyzes the phosphorolysis of single-stranded polyribonucleotides processively in the 3'- to 5'-direction. This chain is Polyribonucleotide nucleotidyltransferase, found in Mesorhizobium japonicum (strain LMG 29417 / CECT 9101 / MAFF 303099) (Mesorhizobium loti (strain MAFF 303099)).